The following is an 886-amino-acid chain: Leucine-rich repeat-containing protein sog2 (886 aa).

LRR repeat units lie at residues 28–49 (NALT…QLER), 53–74 (RIAR…ILKF), 76–97 (RLRY…LCRL), 99–120 (SLEI…FGAL), 122–143 (NLKV…IAHM), and 145–166 (NLEI…IANN). 4 disordered regions span residues 236–288 (SPGM…THPP), 301–364 (SPRQ…ASPI), 394–431 (PTQL…STRL), and 455–483 (RIFA…TNDS). Residues 243-277 (VTPSPHSHSPAGHQQSTPKSTLSKTNENSEGTLYD) are compositionally biased toward polar residues. Ser301 carries the post-translational modification Phosphoserine. Composition is skewed to polar residues over residues 312-347 (SLAT…SSVA), 394-406 (PTQL…TSAI), and 419-431 (SNST…STRL). Residue Ser464 is modified to Phosphoserine.

It is found in the cytoplasm. It localises to the nucleus. This is Leucine-rich repeat-containing protein sog2 from Schizosaccharomyces pombe (strain 972 / ATCC 24843) (Fission yeast).